The chain runs to 557 residues: Dihydroxy-acid dehydratase (557 aa).

Asp-78 serves as a coordination point for Mg(2+). Cys-119 is a [2Fe-2S] cluster binding site. Mg(2+) is bound by residues Asp-120 and Lys-121. Lys-121 is modified (N6-carboxylysine). Cys-192 contributes to the [2Fe-2S] cluster binding site. Glu-442 lines the Mg(2+) pocket. The active-site Proton acceptor is Ser-468.

This sequence belongs to the IlvD/Edd family. Homodimer. [2Fe-2S] cluster serves as cofactor. It depends on Mg(2+) as a cofactor.

The enzyme catalyses (2R)-2,3-dihydroxy-3-methylbutanoate = 3-methyl-2-oxobutanoate + H2O. The catalysed reaction is (2R,3R)-2,3-dihydroxy-3-methylpentanoate = (S)-3-methyl-2-oxopentanoate + H2O. The protein operates within amino-acid biosynthesis; L-isoleucine biosynthesis; L-isoleucine from 2-oxobutanoate: step 3/4. Its pathway is amino-acid biosynthesis; L-valine biosynthesis; L-valine from pyruvate: step 3/4. In terms of biological role, functions in the biosynthesis of branched-chain amino acids. Catalyzes the dehydration of (2R,3R)-2,3-dihydroxy-3-methylpentanoate (2,3-dihydroxy-3-methylvalerate) into 2-oxo-3-methylpentanoate (2-oxo-3-methylvalerate) and of (2R)-2,3-dihydroxy-3-methylbutanoate (2,3-dihydroxyisovalerate) into 2-oxo-3-methylbutanoate (2-oxoisovalerate), the penultimate precursor to L-isoleucine and L-valine, respectively. This Bacillus cereus (strain AH187) protein is Dihydroxy-acid dehydratase.